A 370-amino-acid chain; its full sequence is Aldo-keto reductase dtxS3 (370 aa).

Asp-78 serves as a coordination point for NADP(+). Tyr-83 (proton donor) is an active-site residue. Substrate is bound at residue His-174. NADP(+)-binding positions include 204–205 (SS), Gln-230, 259–269 (GPLASGRLARR), and 333–341 (GSVGRIEEA).

The protein belongs to the aldo/keto reductase family.

It participates in secondary metabolite biosynthesis. Functionally, aldo-keto reductase; part of the gene cluster that mediates the biosynthesis of destruxins, insecticidal cyclic hexadepsipeptides which induce flaccid paralysis and visceral muscle contraction in insects through targeting the calcium channels and vacuolar-type ATPases. The aldo-keto reductase dtxS3 converts alpha-ketoisocaproic acid from deaminated leucine into alpha-hydroxyisocaproic acid (HIC), which is the first substrate for destruxin assembly by dtxS1. L-aspartate decarboxylase dtxS4 converts aspartic acid into beta-alanine, the last substrate for the destruxin assembly line performed by dtxS1. The nonribosomal peptide synthetase dtxS1 synthesizes destruxins B and B2, whereas the cytochrome P450 monooxygenase dtxS2 is required to convert destruxin B into other destruxin derivatives, including destructins C, D, A and E. Destruxin E-diol (ED) is further produced in a non-enzymatic manner from destruxin E. Destruxins play an important role in virulence and escape from insect host immune defenses. The sequence is that of Aldo-keto reductase dtxS3 from Metarhizium robertsii (strain ARSEF 23 / ATCC MYA-3075) (Metarhizium anisopliae (strain ARSEF 23)).